Consider the following 419-residue polypeptide: Gamma-glutamyl phosphate reductase (419 aa).

It belongs to the gamma-glutamyl phosphate reductase family.

The protein localises to the cytoplasm. The catalysed reaction is L-glutamate 5-semialdehyde + phosphate + NADP(+) = L-glutamyl 5-phosphate + NADPH + H(+). The protein operates within amino-acid biosynthesis; L-proline biosynthesis; L-glutamate 5-semialdehyde from L-glutamate: step 2/2. Functionally, catalyzes the NADPH-dependent reduction of L-glutamate 5-phosphate into L-glutamate 5-semialdehyde and phosphate. The product spontaneously undergoes cyclization to form 1-pyrroline-5-carboxylate. This is Gamma-glutamyl phosphate reductase from Bordetella bronchiseptica (strain ATCC BAA-588 / NCTC 13252 / RB50) (Alcaligenes bronchisepticus).